The following is a 315-amino-acid chain: Protein FRA10AC1 homolog (315 aa).

M1 carries the N-acetylmethionine modification. The tract at residues 1 to 28 (MHGHGGYDSDFSDDEQGGGSSKKRKKTV) is disordered. Phosphoserine is present on residues S9 and S12. Residue K36 is modified to N6-acetyllysine. A compositionally biased stretch (basic residues) spans 225 to 235 (KEIKSTKKRSK). The interval 225 to 308 (KEIKSTKKRS…EKSQEEEFDD (84 aa)) is disordered. The span at 236–245 (TKTESDESPH) shows a compositional bias: basic and acidic residues. Phosphoserine occurs at positions 251 and 252. Positions 257 to 279 (SQGKDEGHSSSKRSEDSRNRNAG) are enriched in basic and acidic residues. 2 positions are modified to phosphoserine: S283 and S285.

As to quaternary structure, interacts with ESS2.

It is found in the nucleus. Its function is as follows. May be involved in pre-mRNA splicing. In Rattus norvegicus (Rat), this protein is Protein FRA10AC1 homolog (Fra10ac1).